Reading from the N-terminus, the 511-residue chain is 2,3-bisphosphoglycerate-independent phosphoglycerate mutase (511 aa).

Mn(2+) is bound by residues aspartate 18 and serine 68. Serine 68 serves as the catalytic Phosphoserine intermediate. Substrate-binding positions include histidine 129, 159–160 (RD), arginine 191, lysine 197, 261–264 (RSDR), and lysine 329. Positions 396, 400, 437, 438, and 459 each coordinate Mn(2+). The segment at 442–464 (ERMTKQAPDGSVRPYGGHTTNPV) is disordered.

The protein belongs to the BPG-independent phosphoglycerate mutase family. As to quaternary structure, monomer. It depends on Mn(2+) as a cofactor.

It catalyses the reaction (2R)-2-phosphoglycerate = (2R)-3-phosphoglycerate. The protein operates within carbohydrate degradation; glycolysis; pyruvate from D-glyceraldehyde 3-phosphate: step 3/5. Functionally, catalyzes the interconversion of 2-phosphoglycerate and 3-phosphoglycerate. The sequence is that of 2,3-bisphosphoglycerate-independent phosphoglycerate mutase from Streptomyces coelicolor (strain ATCC BAA-471 / A3(2) / M145).